We begin with the raw amino-acid sequence, 71 residues long: Small ribosomal subunit protein bS21 (71 aa).

Belongs to the bacterial ribosomal protein bS21 family.

This Shewanella sediminis (strain HAW-EB3) protein is Small ribosomal subunit protein bS21.